The chain runs to 819 residues: Protein O-mannosyl-transferase tmem260 (819 aa).

Over residues 1–10 the composition is skewed to polar residues; sequence MNNSPTLSNT. A disordered region spans residues 1–68; it reads MNNSPTLSNT…NNNNNIINVN (68 aa). Over residues 15–68 the composition is skewed to low complexity; that stretch reads NNNNNSNSNSNSNNNNNNNNNNNNNSNNNNNNNNNVNRNVNNRNNNNNNIINVN. 3 N-linked (GlcNAc...) asparagine glycosylation sites follow: N18, N38, and N70. A run of 7 helical transmembrane segments spans residues 113–133, 152–172, 185–205, 210–230, 232–252, 285–305, and 316–336; these read IACI…TQYP, VAHP…SHII, FMSS…VYLW, WCGL…MYQI, GEVF…GVWY, LTNQ…LMFI, and ILSN…LLFI. N-linked (GlcNAc...) asparagine glycosylation occurs at N349. 4 helical membrane-spanning segments follow: residues 391–411, 427–447, 459–479, and 505–525; these read LIIQ…LNLL, MIIF…NLPI, FFMQ…KSIF, and YLLP…NYNL. 4 N-linked (GlcNAc...) asparagine glycosylation sites follow: N531, N686, N693, and N783.

Belongs to the glycosyltransferase 117 (GT117) family.

It is found in the endoplasmic reticulum membrane. The catalysed reaction is a di-trans,poly-cis-dolichyl beta-D-mannosyl phosphate + L-seryl-[protein] = 3-O-(alpha-D-mannosyl)-L-seryl-[protein] + a di-trans,poly-cis-dolichyl phosphate + H(+). It carries out the reaction a di-trans,poly-cis-dolichyl beta-D-mannosyl phosphate + L-threonyl-[protein] = 3-O-(alpha-D-mannosyl)-L-threonyl-[protein] + a di-trans,poly-cis-dolichyl phosphate + H(+). O-mannosyl-transferase that transfers mannosyl residues to the hydroxyl group of serine or threonine residues of proteins. The sequence is that of Protein O-mannosyl-transferase tmem260 from Dictyostelium discoideum (Social amoeba).